The sequence spans 220 residues: MFSEIAPRYDLLNRLLSFGADLRWRRRAVDLALEKAPKRILDLATGTGDLALMLKERAPGAEVVGADFAPPMLAIARRKAEARGLEVRFLEADALALPFPDGAFDAVTIAFGFRNFADYEKALGELYRVLAPGGRLVVLEFPPPPKGAFGLVYRVYFQRVLPFLGGLISGNFGAYRYLPESVEAFPAPEALKAMMAAAGFSVRYELLTFGVAAIHVGDRP.

Residues T47, D67, and 93–94 contribute to the S-adenosyl-L-methionine site; that span reads DA.

It belongs to the class I-like SAM-binding methyltransferase superfamily. MenG/UbiE family.

The catalysed reaction is a 2-demethylmenaquinol + S-adenosyl-L-methionine = a menaquinol + S-adenosyl-L-homocysteine + H(+). Its pathway is quinol/quinone metabolism; menaquinone biosynthesis; menaquinol from 1,4-dihydroxy-2-naphthoate: step 2/2. Its function is as follows. Methyltransferase required for the conversion of demethylmenaquinol (DMKH2) to menaquinol (MKH2). This is Demethylmenaquinone methyltransferase from Thermus thermophilus (strain ATCC BAA-163 / DSM 7039 / HB27).